Consider the following 74-residue polypeptide: MRADIHPKYEKLVATCSCGNVIETRSALGKETIYLDVCSACHPFYTGKQKNVDTGGRIDKFKQRFAGMSRSIKR.

Positions 16, 18, 38, and 41 each coordinate Zn(2+).

Belongs to the bacterial ribosomal protein bL31 family. Type A subfamily. As to quaternary structure, part of the 50S ribosomal subunit. Zn(2+) serves as cofactor.

In terms of biological role, binds the 23S rRNA. The polypeptide is Large ribosomal subunit protein bL31 (Acinetobacter baumannii (strain AB307-0294)).